The chain runs to 508 residues: Protein FAM227B (508 aa).

2 disordered regions span residues 1–22 (MAGQ…MQEP) and 485–508 (ASLS…EEEY). Positions 486 to 497 (SLSSSSSSSPSS) are enriched in low complexity.

The protein belongs to the FAM227 family.

The polypeptide is Protein FAM227B (FAM227B) (Homo sapiens (Human)).